The sequence spans 400 residues: Melanization protease 1 (400 aa).

The N-terminal stretch at 1-22 (MEPHFFFTVLWMLLMGTSSTYA) is a signal peptide. The propeptide at 23–137 (QEIFGYCRTP…PNCGENFGDR (115 aa)) is activation peptide. A Clip domain is found at 28 to 91 (YCRTPDENSG…FCFTNVQICC (64 aa)). 3 cysteine pairs are disulfide-bonded: Cys29–Cys90, Cys39–Cys70, and Cys45–Cys91. Residues 98–120 (NQQPQWGNHPQPTQTTKPTKRSG) form a disordered region. Disulfide bonds link Cys130/Cys268, Cys168/Cys184, and Cys210/Cys220. In terms of domain architecture, Peptidase S1 spans 138–399 (VVGGNETTKR…YLNWIENNVR (262 aa)). Asn142 carries N-linked (GlcNAc...) asparagine glycosylation. His183 functions as the Charge relay system in the catalytic mechanism. Ca(2+) contacts are provided by Glu201, Asp203, Thr206, and Asp209. Asp248 (charge relay system) is an active-site residue. Asn296 is a glycosylation site (N-linked (GlcNAc...) asparagine). 2 disulfides stabilise this stretch: Cys315–Cys332 and Cys342–Cys375. The active-site Charge relay system is Ser346.

This sequence belongs to the peptidase S1 family. CLIP subfamily.

Its function is as follows. Serine protease which plays an essential role in the melanization immune response by acting downstream of sp7 to activate prophenoloxidase (PPO1). May function in diverse Hayan-dependent PPO1-activating cascades that are negatively controlled by different serpin proteins; Spn27A in the hemolymph and Spn77BA in the trachea. Regulation of melanization and PPO1 activation appears to be largely independent of the Toll signaling pathway. This chain is Melanization protease 1, found in Drosophila melanogaster (Fruit fly).